The sequence spans 21 residues: Thioredoxin (21 aa).

Lys-3 is subject to N6-acetyllysine. N6-succinyllysine is present on Lys-8.

This sequence belongs to the thioredoxin family. As to quaternary structure, homodimer; disulfide-linked. Interacts with TXNIP through the redox-active site. Interacts with MAP3K5 and CASP3. Interacts with APEX1; the interaction stimulates the FOS/JUN AP-1 DNA-binding activity in a redox-dependent manner.

Its subcellular location is the nucleus. It localises to the cytoplasm. The protein resides in the secreted. Its function is as follows. Participates in various redox reactions through the reversible oxidation of its active center dithiol to a disulfide and catalyzes dithiol-disulfide exchange reactions. Plays a role in the reversible S-nitrosylation of cysteine residues in target proteins, and thereby contributes to the response to intracellular nitric oxide. Nitrosylates the active site Cys of CASP3 in response to nitric oxide (NO), and thereby inhibits caspase-3 activity. Induces the FOS/JUN AP-1 DNA binding activity in ionizing radiation (IR) cells through its oxidation/reduction status and stimulates AP-1 transcriptional activity. This Canis lupus familiaris (Dog) protein is Thioredoxin (TXN).